Consider the following 487-residue polypeptide: UDP-N-acetylmuramoyl-L-alanyl-D-glutamate--2,6-diaminopimelate ligase (487 aa).

Leu23 and Ser25 together coordinate UDP-N-acetyl-alpha-D-muramoyl-L-alanyl-D-glutamate. 108–114 (GTNGKTS) serves as a coordination point for ATP. UDP-N-acetyl-alpha-D-muramoyl-L-alanyl-D-glutamate is bound by residues 150-151 (TT), Ser177, Gln183, and Arg185. Lys217 is modified (N6-carboxylysine). Residues Arg378, 402 to 405 (DNPR), Gly453, and Glu457 contribute to the meso-2,6-diaminopimelate site. A Meso-diaminopimelate recognition motif motif is present at residues 402–405 (DNPR).

Belongs to the MurCDEF family. MurE subfamily. It depends on Mg(2+) as a cofactor. Carboxylation is probably crucial for Mg(2+) binding and, consequently, for the gamma-phosphate positioning of ATP.

It localises to the cytoplasm. The enzyme catalyses UDP-N-acetyl-alpha-D-muramoyl-L-alanyl-D-glutamate + meso-2,6-diaminopimelate + ATP = UDP-N-acetyl-alpha-D-muramoyl-L-alanyl-gamma-D-glutamyl-meso-2,6-diaminopimelate + ADP + phosphate + H(+). It functions in the pathway cell wall biogenesis; peptidoglycan biosynthesis. Catalyzes the addition of meso-diaminopimelic acid to the nucleotide precursor UDP-N-acetylmuramoyl-L-alanyl-D-glutamate (UMAG) in the biosynthesis of bacterial cell-wall peptidoglycan. The sequence is that of UDP-N-acetylmuramoyl-L-alanyl-D-glutamate--2,6-diaminopimelate ligase from Pseudomonas aeruginosa (strain ATCC 15692 / DSM 22644 / CIP 104116 / JCM 14847 / LMG 12228 / 1C / PRS 101 / PAO1).